A 564-amino-acid chain; its full sequence is Type 2 DNA topoisomerase 6 subunit B (564 aa).

ATP-binding positions include N46, D78, 99-100, 109-116, and K471; these read TK and GQQGIGIS.

The protein belongs to the TOP6B family. As to quaternary structure, homodimer. Heterotetramer of two Top6A and two Top6B chains.

The enzyme catalyses ATP-dependent breakage, passage and rejoining of double-stranded DNA.. Functionally, relaxes both positive and negative superturns and exhibits a strong decatenase activity. In Pyrococcus horikoshii (strain ATCC 700860 / DSM 12428 / JCM 9974 / NBRC 100139 / OT-3), this protein is Type 2 DNA topoisomerase 6 subunit B.